The primary structure comprises 184 residues: Protein GrpE (184 aa).

The span at 1–26 shows a compositional bias: polar residues; it reads MANEQNEQAQDIQNEQVEQSNEQTQA. Positions 1 to 34 are disordered; that stretch reads MANEQNEQAQDIQNEQVEQSNEQTQAEGVEQAND.

This sequence belongs to the GrpE family. Homodimer.

It is found in the cytoplasm. Its function is as follows. Participates actively in the response to hyperosmotic and heat shock by preventing the aggregation of stress-denatured proteins, in association with DnaK and GrpE. It is the nucleotide exchange factor for DnaK and may function as a thermosensor. Unfolded proteins bind initially to DnaJ; upon interaction with the DnaJ-bound protein, DnaK hydrolyzes its bound ATP, resulting in the formation of a stable complex. GrpE releases ADP from DnaK; ATP binding to DnaK triggers the release of the substrate protein, thus completing the reaction cycle. Several rounds of ATP-dependent interactions between DnaJ, DnaK and GrpE are required for fully efficient folding. This Acinetobacter baumannii (strain AB307-0294) protein is Protein GrpE.